The primary structure comprises 558 residues: Polysialic acid transport protein KpsD (558 aa).

A signal peptide spans 1-20; it reads MKLFKSILLIAACHAAQASA.

The protein to E.coli K5 KpsD.

The protein localises to the periplasm. Involved in the translocation of the polysialic acid capsule across the outer membrane to the cell surface. May function as the periplasmic binding element of the PSA transport system, in which it transiently interacts with the membrane component of the transporter, binds polysaccharide and transports the polymer to a component in the outer membrane. This Escherichia coli protein is Polysialic acid transport protein KpsD (kpsD).